The sequence spans 345 residues: D-alanine--D-alanine ligase (345 aa).

The ATP-grasp domain maps to Lys133 to Thr332. Ala160–Tyr211 lines the ATP pocket. Residues Asp284, Glu296, and Asn298 each contribute to the Mg(2+) site.

It belongs to the D-alanine--D-alanine ligase family. Mg(2+) is required as a cofactor. It depends on Mn(2+) as a cofactor.

It localises to the cytoplasm. It carries out the reaction 2 D-alanine + ATP = D-alanyl-D-alanine + ADP + phosphate + H(+). The protein operates within cell wall biogenesis; peptidoglycan biosynthesis. Cell wall formation. This Sulfurimonas denitrificans (strain ATCC 33889 / DSM 1251) (Thiomicrospira denitrificans (strain ATCC 33889 / DSM 1251)) protein is D-alanine--D-alanine ligase.